The primary structure comprises 547 residues: Nitrosoguanidine resistance protein SNG1 (547 aa).

A disordered region spans residues 35 to 86 (NQRFAEGSGHSSDLAKSLEDYRPPDEKPSSLSSVGEGGANEEEKGGNDGGPL). Over residues 50 to 62 (KSLEDYRPPDEKP) the composition is skewed to basic and acidic residues. Position 91 is a phosphothreonine (Thr91). Transmembrane regions (helical) follow at residues 109–129 (FVLN…IYWG), 159–179 (ISAI…IYNA), 318–338 (ILMA…VLQL), 363–383 (LISW…SAIF), 394–414 (GGFV…GGAN), 418–438 (LSLV…TWII), 457–477 (YGYI…FLNL), and 488–508 (ILVA…KFAG). The segment covering 526–536 (ATQRASRPAEA) has biased composition (low complexity). The disordered stretch occupies residues 526–547 (ATQRASRPAEANTDKNNNPPGN).

This sequence to yeast YJR015W.

Its subcellular location is the membrane. Its function is as follows. May function as a N-methyl-N'nitro-N-nitrosoguanidine (MNNG) export permease. This is Nitrosoguanidine resistance protein SNG1 (SNG1) from Saccharomyces cerevisiae (strain ATCC 204508 / S288c) (Baker's yeast).